The following is a 57-amino-acid chain: Ribosome modulation factor 2 (57 aa).

The interval 1–24 (MKRQKRDKLGRAHSNGYQAGLGGK) is disordered.

Belongs to the ribosome modulation factor family.

The protein localises to the cytoplasm. Functionally, during stationary phase, converts 70S ribosomes to an inactive dimeric form (100S ribosomes). The chain is Ribosome modulation factor 2 from Colwellia psychrerythraea (strain 34H / ATCC BAA-681) (Vibrio psychroerythus).